The sequence spans 456 residues: tRNA-2-methylthio-N(6)-dimethylallyladenosine synthase (456 aa).

The 118-residue stretch at 6–123 folds into the MTTase N-terminal domain; the sequence is KHVYIETYGC…LPNLIEEAQR (118 aa). Residues cysteine 15, cysteine 52, cysteine 86, cysteine 160, cysteine 164, and cysteine 167 each coordinate [4Fe-4S] cluster. A Radical SAM core domain is found at 146–380; that stretch reads RAEGPTAYVS…RILEMAASIS (235 aa). The region spanning 381–444 is the TRAM domain; the sequence is EAMVGTEQWV…KNSLRGRLIE (64 aa).

The protein belongs to the methylthiotransferase family. MiaB subfamily. In terms of assembly, monomer. Requires [4Fe-4S] cluster as cofactor.

The protein localises to the cytoplasm. It catalyses the reaction N(6)-dimethylallyladenosine(37) in tRNA + (sulfur carrier)-SH + AH2 + 2 S-adenosyl-L-methionine = 2-methylsulfanyl-N(6)-dimethylallyladenosine(37) in tRNA + (sulfur carrier)-H + 5'-deoxyadenosine + L-methionine + A + S-adenosyl-L-homocysteine + 2 H(+). Functionally, catalyzes the methylthiolation of N6-(dimethylallyl)adenosine (i(6)A), leading to the formation of 2-methylthio-N6-(dimethylallyl)adenosine (ms(2)i(6)A) at position 37 in tRNAs that read codons beginning with uridine. The polypeptide is tRNA-2-methylthio-N(6)-dimethylallyladenosine synthase (Dichelobacter nodosus (strain VCS1703A)).